Here is a 565-residue protein sequence, read N- to C-terminus: MKKKSFCLNFRANKKKKNFVLSKKNIFGKTQKFKICVPFFTYTENKINTHISPFDSFSCLFASQSIESLQNQKFSKYSLQKYQRSNQDTLIVQRPMVREGDWVQSGDLLADCASSLGGELCLGKNIFIAYMPWEGYNYEDAILISQRLVTEDVYTSVHIESYEVETKNTKLGKEQITNKIPDIPEKEKNHLDERGIVKLGTFVHEGQILVGKVTPIQKKYRSGYEKLLYTILEKELIPMRDSSLRTPKGLKAKVVEIKILNFSWNFAPTEKTLPSPIQQKKKNSKILLKKQRKPERVQVYLAEKRKIQVGDKMAGRHGNKGIVSKILPIQDMPFLPDGTPLDMVLNPLGVPSRMNVGQIYECLLGLASKYLNHYYRIQAFDEIYGPHASRSFTFAKLYEARLKTNQKWLFNPCYPGKMQIFDGQTGEPYDSPVTVGIAYMLKLVHLVDDKIHARSTGPYSLVTQQPLRGRSKYGGQRLGEMEVWAIEAYGAAFILLEMLTIKSDDISGRMTLWSNILLNMPIYIGTPESFKVLICELQALCLDMGLFQLNKKGFLTQIEHLMQLP.

This sequence belongs to the RNA polymerase beta chain family. As to quaternary structure, in plastids the minimal PEP RNA polymerase catalytic core is composed of four subunits: alpha, beta, beta', and beta''. When a (nuclear-encoded) sigma factor is associated with the core the holoenzyme is formed, which can initiate transcription.

The protein resides in the plastid. It is found in the chloroplast. It carries out the reaction RNA(n) + a ribonucleoside 5'-triphosphate = RNA(n+1) + diphosphate. Functionally, DNA-dependent RNA polymerase catalyzes the transcription of DNA into RNA using the four ribonucleoside triphosphates as substrates. This Tetradesmus obliquus (Green alga) protein is DNA-directed RNA polymerase subunit beta C-terminal section (rpoB2).